The primary structure comprises 209 residues: Uracil phosphoribosyltransferase (209 aa).

Residues Arg-79, Arg-104, and 131–139 (DPMLATGGS) contribute to the 5-phospho-alpha-D-ribose 1-diphosphate site. Uracil contacts are provided by residues Ile-194 and 199-201 (GDA). 5-phospho-alpha-D-ribose 1-diphosphate is bound at residue Asp-200.

The protein belongs to the UPRTase family. Requires Mg(2+) as cofactor.

It catalyses the reaction UMP + diphosphate = 5-phospho-alpha-D-ribose 1-diphosphate + uracil. It functions in the pathway pyrimidine metabolism; UMP biosynthesis via salvage pathway; UMP from uracil: step 1/1. Its activity is regulated as follows. Allosterically activated by GTP. Its function is as follows. Catalyzes the conversion of uracil and 5-phospho-alpha-D-ribose 1-diphosphate (PRPP) to UMP and diphosphate. The sequence is that of Uracil phosphoribosyltransferase from Exiguobacterium sp. (strain ATCC BAA-1283 / AT1b).